We begin with the raw amino-acid sequence, 204 residues long: Protein XpaC (204 aa).

Functionally, in double copy it causes aberrant cell morphology, filamentation and inhibits sporulation. Hydrolyzes 5-bromo-4-chloroindolyl phosphate. In Bacillus subtilis (strain 168), this protein is Protein XpaC (xpaC).